The sequence spans 278 residues: Glutamate racemase (278 aa).

Residues 13 to 14 (DS) and 45 to 46 (YG) each bind substrate. C76 acts as the Proton donor/acceptor in catalysis. Position 77–78 (77–78 (NT)) interacts with substrate. Residue C185 is the Proton donor/acceptor of the active site. 186 to 187 (TH) provides a ligand contact to substrate.

This sequence belongs to the aspartate/glutamate racemases family.

It catalyses the reaction L-glutamate = D-glutamate. The protein operates within cell wall biogenesis; peptidoglycan biosynthesis. In terms of biological role, provides the (R)-glutamate required for cell wall biosynthesis. The chain is Glutamate racemase from Gloeothece citriformis (strain PCC 7424) (Cyanothece sp. (strain PCC 7424)).